The chain runs to 408 residues: Tryptophan--tRNA ligase, chloroplastic/mitochondrial (408 aa).

The transit peptide at 1–52 (MGHATSLSHFLILSSSRFSRLGSLTRLLSKPTSLSGSFSSISVTGQGFRCCC) directs the protein to the chloroplast and mitochondrion. S53 carries the post-translational modification N-acetylserine. Residues Q72 and 78–81 (HLGN) contribute to the ATP site. A 'HIGH' region motif is present at residues 73 to 81 (PTGSVHLGN). An L-tryptophan-binding site is contributed by D197. ATP is bound by residues 209–211 (GED), V260, 269–273 (KMSKS), and K272. The 'KMSKS' region signature appears at 269 to 273 (KMSKS).

Belongs to the class-I aminoacyl-tRNA synthetase family.

It is found in the plastid. It localises to the chloroplast. The protein localises to the mitochondrion. The enzyme catalyses tRNA(Trp) + L-tryptophan + ATP = L-tryptophyl-tRNA(Trp) + AMP + diphosphate + H(+). This Arabidopsis thaliana (Mouse-ear cress) protein is Tryptophan--tRNA ligase, chloroplastic/mitochondrial.